The chain runs to 84 residues: Small ribosomal subunit protein uS17 (84 aa).

It belongs to the universal ribosomal protein uS17 family. As to quaternary structure, part of the 30S ribosomal subunit.

One of the primary rRNA binding proteins, it binds specifically to the 5'-end of 16S ribosomal RNA. The sequence is that of Small ribosomal subunit protein uS17 from Hamiltonella defensa subsp. Acyrthosiphon pisum (strain 5AT).